The following is a 98-amino-acid chain: NADH-ubiquinone oxidoreductase chain 4L (98 aa).

The next 3 helical transmembrane spans lie at 2–22, 29–49, and 61–81; these read TQAS…TLIF, TLLC…MTAL, and IVML…LAMI.

This sequence belongs to the complex I subunit 4L family. As to quaternary structure, core subunit of respiratory chain NADH dehydrogenase (Complex I) which is composed of 45 different subunits.

The protein localises to the mitochondrion inner membrane. It carries out the reaction a ubiquinone + NADH + 5 H(+)(in) = a ubiquinol + NAD(+) + 4 H(+)(out). Functionally, core subunit of the mitochondrial membrane respiratory chain NADH dehydrogenase (Complex I) which catalyzes electron transfer from NADH through the respiratory chain, using ubiquinone as an electron acceptor. Part of the enzyme membrane arm which is embedded in the lipid bilayer and involved in proton translocation. This is NADH-ubiquinone oxidoreductase chain 4L (MT-ND4L) from Calomys musculinus (Drylands vesper mouse).